The primary structure comprises 154 residues: Ribonuclease H (154 aa).

Positions 1 to 142 (MQKQIEIFTD…CDELAKKGAE (142 aa)) constitute an RNase H type-1 domain. Residues D10, E48, D70, and D134 each coordinate Mg(2+).

The protein belongs to the RNase H family. As to quaternary structure, monomer. Requires Mg(2+) as cofactor.

The protein localises to the cytoplasm. It carries out the reaction Endonucleolytic cleavage to 5'-phosphomonoester.. Its function is as follows. Endonuclease that specifically degrades the RNA of RNA-DNA hybrids. This is Ribonuclease H from Haemophilus influenzae (strain 86-028NP).